A 370-amino-acid polypeptide reads, in one-letter code: Type II restriction enzyme MjaII (370 aa).

This sequence belongs to the TdeIII type II restriction endonuclease family.

It carries out the reaction Endonucleolytic cleavage of DNA to give specific double-stranded fragments with terminal 5'-phosphates.. A P subtype restriction enzyme that recognizes the double-stranded sequence 5'-GGNCC-3'; the cleavage site is unknown. This chain is Type II restriction enzyme MjaII (mjaIIR), found in Methanocaldococcus jannaschii (strain ATCC 43067 / DSM 2661 / JAL-1 / JCM 10045 / NBRC 100440) (Methanococcus jannaschii).